Here is a 482-residue protein sequence, read N- to C-terminus: 2-succinylbenzoate--CoA ligase (482 aa).

The protein belongs to the ATP-dependent AMP-binding enzyme family. MenE subfamily.

The catalysed reaction is 2-succinylbenzoate + ATP + CoA = 2-succinylbenzoyl-CoA + AMP + diphosphate. The protein operates within quinol/quinone metabolism; 1,4-dihydroxy-2-naphthoate biosynthesis; 1,4-dihydroxy-2-naphthoate from chorismate: step 5/7. It participates in quinol/quinone metabolism; menaquinone biosynthesis. In terms of biological role, converts 2-succinylbenzoate (OSB) to 2-succinylbenzoyl-CoA (OSB-CoA). The sequence is that of 2-succinylbenzoate--CoA ligase from Bacillus cereus (strain ATCC 14579 / DSM 31 / CCUG 7414 / JCM 2152 / NBRC 15305 / NCIMB 9373 / NCTC 2599 / NRRL B-3711).